A 441-amino-acid polypeptide reads, in one-letter code: Heat shock factor protein 4 (441 aa).

The DNA-binding element occupies 17-121 (NVPAFLTKLW…EHLLEHIKRK (105 aa)). Residues 130 to 205 (TKVRQEDLSK…QMQSNSPSTV (76 aa)) form a hydrophobic repeat HR-A/B region.

This sequence belongs to the HSF family. Predominantly expressed in the eye.

It is found in the nucleus. Its function is as follows. Heat-shock transcription factor that specifically binds heat shock promoter elements (HSE). Required for denucleation and organelle rupture and degradation that occur during eye lens terminal differentiation, when fiber cells that compose the lens degrade all membrane-bound organelles in order to provide lens with transparency to allow the passage of light. In this process, may regulate denucleation of lens fiber cells in part by activating dnase1l1l and dnase2b transcription. May be involved in DNA repair through the transcriptional regulation of rad51. May up-regulate TP53 protein in lens fiber cells, possibly through protein stabilization. In the eye lens, controls the expression of alpha-crystallin B chain/CRYAB and consequently may be involved in the regulation of lysosomal acidification. The sequence is that of Heat shock factor protein 4 from Danio rerio (Zebrafish).